The sequence spans 1558 residues: Hybrid PKS-NRPS synthetase TAS1 (1558 aa).

The interval 27-392 is condensation (C) domain; that stretch reads YPMTKAQESL…RGLETPRAQV (366 aa). Residues 522 to 919 are adenylation (A) domain; the sequence is TYKELNERSN…TITDVMPEVT (398 aa). Positions 995-1028 are disordered; that stretch reads TSGSSSSATPSLVSSGSTTCRSPSTSSCSDSRSA. The Carrier domain occupies 1027 to 1104; the sequence is SASPAITSAV…GQVDLLCGSE (78 aa). At Ser-1063 the chain carries O-(pantetheine 4'-phosphoryl)serine. The disordered stretch occupies residues 1116–1144; the sequence is LGRGRTKSPAKIVDSQGRSSPSTIPSGGR. Residues 1131 to 1140 show a composition bias toward polar residues; the sequence is QGRSSPSTIP. The 414-residue stretch at 1145-1558 folds into the Ketosynthase family 3 (KS3) domain; sequence KSEIAIVGIS…GVNAHCVLRS (414 aa). Residues Cys-1308, His-1444, and Asn-1484 each act as for beta-ketoacyl synthase activity in the active site.

The protein in the N-terminal section; belongs to the NRP synthetase family. It depends on pantetheine 4'-phosphate as a cofactor.

The catalysed reaction is acetoacetyl-CoA + L-isoleucine + ATP = tenuazonic acid + AMP + diphosphate + CoA + 2 H(+). Its function is as follows. Hybrid PKS-NRPS synthetase that mediates the biosynthesis of the toxin tenuazonic acid (TeA), an inhibitor of protein biosynthesis on ribosomes by suppressing the release of new protein. TAS1 alone is sufficient for TeA synthesis via the condensation of isoleucine (Ile) with acetoacetyl-CoA by the N-terminal NRPS module and subsequent cyclization conducted by the C-terminal KS domain. This is Hybrid PKS-NRPS synthetase TAS1 from Gloeophyllum trabeum (strain ATCC 11539 / FP-39264 / Madison 617) (Brown rot fungus).